We begin with the raw amino-acid sequence, 399 residues long: Enoyl-[acyl-carrier-protein] reductase [NADH] (399 aa).

Residues glycine 49–tyrosine 54, phenylalanine 75–glutamate 76, aspartate 112–alanine 113, and leucine 141–alanine 142 each bind NAD(+). Tyrosine 227 serves as a coordination point for substrate. The active-site Proton donor is the tyrosine 237. NAD(+) is bound by residues lysine 246 and valine 272 to threonine 274.

This sequence belongs to the TER reductase family. As to quaternary structure, monomer.

It catalyses the reaction a 2,3-saturated acyl-[ACP] + NAD(+) = a (2E)-enoyl-[ACP] + NADH + H(+). Its pathway is lipid metabolism; fatty acid biosynthesis. Its function is as follows. Involved in the final reduction of the elongation cycle of fatty acid synthesis (FAS II). Catalyzes the reduction of a carbon-carbon double bond in an enoyl moiety that is covalently linked to an acyl carrier protein (ACP). This is Enoyl-[acyl-carrier-protein] reductase [NADH] from Pseudomonas putida (strain W619).